A 162-amino-acid chain; its full sequence is Cyclic pyranopterin monophosphate synthase (162 aa).

Residues 75–77 and 113–114 each bind substrate; these read LCH and ME. Aspartate 128 is an active-site residue.

It belongs to the MoaC family. In terms of assembly, homohexamer; trimer of dimers.

The enzyme catalyses (8S)-3',8-cyclo-7,8-dihydroguanosine 5'-triphosphate = cyclic pyranopterin phosphate + diphosphate. It functions in the pathway cofactor biosynthesis; molybdopterin biosynthesis. Its function is as follows. Catalyzes the conversion of (8S)-3',8-cyclo-7,8-dihydroguanosine 5'-triphosphate to cyclic pyranopterin monophosphate (cPMP). The protein is Cyclic pyranopterin monophosphate synthase of Burkholderia cenocepacia (strain ATCC BAA-245 / DSM 16553 / LMG 16656 / NCTC 13227 / J2315 / CF5610) (Burkholderia cepacia (strain J2315)).